We begin with the raw amino-acid sequence, 638 residues long: MPVITLPDGSQRAFDNPVSVLDVANDIGPGLAKATIAGKVNGELVDAVDMIDADAQLQIITAKDEEGLEILRHSCAHLLGHAIKQLWPNTKMAIGPVIDNGFYYDVDMEESLTQEDLAKLEKRMLELAKTNYNVVKNKVSWQEARDAFEARGESYKMEILDENISKDDRPALYQHEEYTDMCRGPHVPNMKFCHHFKLMKVAGAYWRGDSDNKMLQRIYGTAWADKKQLKSYLQRLEEAEKRDHRKIGKALNLFHWQEEAPGMVFWHNDGWSIYTELESFVRKKLREYGYDEVKGPLMMDRSLWEKSGHWDKYAENMFTTESEKREYAVKPMNCPGHVQIFNQGLKSYRDLPLRMAEFGCCHRNEPSGALHGLMRVRGFTQDDAHIFCTEEQILEEVSGCIKMVYETYAAFGFENIKVKLSTRPEKRVGADEIWDKSEAALAEALKANDIEFDYQPGEGAFYGPKIEFTLHDCLDRAWQCGTVQLDFSMPGRLGSTYVAEDGERKVPVMIHRAILGSLERFIGILTEEFAGFFPLWLAPQQVVVMNITDKQADYASDCVKKLQDLGFRAKSDLRNEKIGFKIREHTLKRIPYMLVVGDKEMEAGEVAVRSRRGDDLGKMGLEDFIAMAQQEVVEKTIK.

The region spanning 1–61 (MPVITLPDGS…DADAQLQIIT (61 aa)) is the TGS domain. A catalytic region spans residues 243–534 (DHRKIGKALN…LTEEFAGFFP (292 aa)). Cysteine 334, histidine 385, and histidine 511 together coordinate Zn(2+).

It belongs to the class-II aminoacyl-tRNA synthetase family. Homodimer. The cofactor is Zn(2+).

It is found in the cytoplasm. It catalyses the reaction tRNA(Thr) + L-threonine + ATP = L-threonyl-tRNA(Thr) + AMP + diphosphate + H(+). Functionally, catalyzes the attachment of threonine to tRNA(Thr) in a two-step reaction: L-threonine is first activated by ATP to form Thr-AMP and then transferred to the acceptor end of tRNA(Thr). Also edits incorrectly charged L-seryl-tRNA(Thr). This Alteromonas mediterranea (strain DSM 17117 / CIP 110805 / LMG 28347 / Deep ecotype) protein is Threonine--tRNA ligase.